The primary structure comprises 894 residues: MNPGFDLSRRNPQEDFELIQRIGSGTYGDVYKARNVNTGELAAIKVIKLEPGEDFAVVQQEIIMMKDCKHPNIVAYFGSYLRRDKLWICMEFCGGGSLQDIYHVTGPLSELQIAYVSRETLQGLYYLHSKGKMHRDIKGANILLTDNGHVKLADFGVSAQITATIAKRKSFIGTPYWMAPEVAAVERKGGYNQLCDLWAVGITAIELAELQPPMFDLHPMRALFLMTKSNFQPPKLKDKMKWSNSFHHFVKMALTKNPKKRPTAEKLLQHPFVTQHLTRSLAIELLDKVNNPDHSTYHDFDDDDPEPLVAVPHRIHSTSRNVREEKTRSEITFGQVKFDPPLRKETEPHHELPDSDGFLDSSEEIYYTARSNLDLQLEYGQGHQGGYFLGANKSLLKSVEEELHQRGHVAHLEDDEGDDDESKHSTLKAKIPPPLPPKPKSIFIPQEMHSTEDENQGTIKRCPMSGSPAKPSQVPPRPPPPRLPPHKPVALGNGMSSFQLNGERDGSLCQQQNEHRGTNLSRKEKKDVPKPISNGLPPTPKVHMGACFSKVFNGCPLKIHCASSWINPDTRDQYLIFGAEEGIYTLNLNELHETSMEQLFPRRCTWLYVMNNCLLSISGKASQLYSHNLPGLFDYARQMQKLPVAIPAHKLPDRILPRKFSVSAKIPETKWCQKCCVVRNPYTGHKYLCGALQTSIVLLEWVEPMQKFMLIKHIDFPIPCPLRMFEMLVVPEQEYPLVCVGVSRGRDFNQVVRFETVNPNSTSSWFTESDTPQTNVTHVTQLERDTILVCLDCCIKIVNLQGRLKSSRKLSSELTFDFQIESIVCLQDSVLAFWKHGMQGRSFRSNEVTQEISDSTRIFRLLGSDRVVVLESRPTDNPTANSNLYILAGHENSY.

M1 is modified (N-acetylmethionine). In terms of domain architecture, Protein kinase spans 16 to 273 (FELIQRIGSG…AEKLLQHPFV (258 aa)). Residues 22–30 (IGSGTYGDV), K45, and K48 each bind ATP. The active-site Proton acceptor is the D136. Phosphoserine occurs at positions 329 and 398. A disordered region spans residues 410-536 (AHLEDDEGDD…DVPKPISNGL (127 aa)). The segment covering 473–487 (QVPPRPPPPRLPPHK) has biased composition (pro residues). The span at 513 to 529 (NEHRGTNLSRKEKKDVP) shows a compositional bias: basic and acidic residues. The 312-residue stretch at 556-867 (PLKIHCASSW…IFRLLGSDRV (312 aa)) folds into the CNH domain.

It belongs to the protein kinase superfamily. STE Ser/Thr protein kinase family. STE20 subfamily. As to quaternary structure, interacts with SH3GL2. Interaction appears to regulate MAP4K3-mediated JNK activation. Mg(2+) is required as a cofactor. As to expression, ubiquitously expressed in all tissues examined, with high levels in heart, brain, placenta, skeletal muscle, kidney and pancreas and lower levels in lung and liver.

The enzyme catalyses L-seryl-[protein] + ATP = O-phospho-L-seryl-[protein] + ADP + H(+). It catalyses the reaction L-threonyl-[protein] + ATP = O-phospho-L-threonyl-[protein] + ADP + H(+). In terms of biological role, serine/threonine kinase that plays a role in the response to environmental stress. Appears to act upstream of the JUN N-terminal pathway. Activator of the Hippo signaling pathway which plays a pivotal role in organ size control and tumor suppression by restricting proliferation and promoting apoptosis. MAP4Ks act in parallel to and are partially redundant with STK3/MST2 and STK4/MST2 in the phosphorylation and activation of LATS1/2, and establish MAP4Ks as components of the expanded Hippo pathway. This is Mitogen-activated protein kinase kinase kinase kinase 3 from Homo sapiens (Human).